The chain runs to 384 residues: MNTPATLPLGGEDTTWTPGINASWAPDEEEDAVRSDGTGTAGMVTIQCIYALVCLVGLVGNALVIFVILRYAKMKTATNIYLLNLAVADELFMLSVPFVASAAALRHWPFGAVLCRAVLSVDGLNMFTSVFCLTVLSVDRYVAVVHPLRAATYRRPSVAKLINLGVWLASLLVTLPIAVFADTRPARGGEAVACNLHWPHPAWSAVFVIYTFLLGFLLPVLAIGLCYLLIVGKMRAVALRAGWQQRRRSEKKITRLVLMVVTVFVLCWMPFYVVQLLNLFVTSLDATVNHVSLILSYANSCANPILYGFLSDNFRRSFQRVLCLRCCLLETTGGAEEEPLDYYATALKSRGGPGCICPPLPCQQEPMQAEPACKRVPFTKTTTF.

The segment at 1-34 (MNTPATLPLGGEDTTWTPGINASWAPDEEEDAVR) is disordered. Topologically, residues 1–41 (MNTPATLPLGGEDTTWTPGINASWAPDEEEDAVRSDGTGTA) are extracellular. N21 carries N-linked (GlcNAc...) asparagine glycosylation. A helical membrane pass occupies residues 42–69 (GMVTIQCIYALVCLVGLVGNALVIFVIL). Over 70–79 (RYAKMKTATN) the chain is Cytoplasmic. A helical membrane pass occupies residues 80–105 (IYLLNLAVADELFMLSVPFVASAAAL). At 106–116 (RHWPFGAVLCR) the chain is on the extracellular side. C115 and C194 form a disulfide bridge. A helical transmembrane segment spans residues 117–138 (AVLSVDGLNMFTSVFCLTVLSV). Topologically, residues 139-160 (DRYVAVVHPLRAATYRRPSVAK) are cytoplasmic. A helical membrane pass occupies residues 161 to 181 (LINLGVWLASLLVTLPIAVFA). At 182–203 (DTRPARGGEAVACNLHWPHPAW) the chain is on the extracellular side. The helical transmembrane segment at 204–228 (SAVFVIYTFLLGFLLPVLAIGLCYL) threads the bilayer. The Cytoplasmic portion of the chain corresponds to 229–254 (LIVGKMRAVALRAGWQQRRRSEKKIT). Residues 255–280 (RLVLMVVTVFVLCWMPFYVVQLLNLF) form a helical membrane-spanning segment. The Extracellular portion of the chain corresponds to 281-287 (VTSLDAT). The helical transmembrane segment at 288–311 (VNHVSLILSYANSCANPILYGFLS) threads the bilayer. Residues 312–384 (DNFRRSFQRV…RVPFTKTTTF (73 aa)) are Cytoplasmic-facing. C323 carries S-palmitoyl cysteine lipidation.

It belongs to the G-protein coupled receptor 1 family. In terms of tissue distribution, brain, lung, heart and islets. Moderate levels in the hippocampus, cortex and olfactory bulb.

It localises to the cell membrane. In terms of biological role, receptor for somatostatin-14. The activity of this receptor is mediated by G proteins which inhibits adenylyl cyclase. It is functionally coupled not only to inhibition of adenylate cyclase, but also to activation of both arachidonate release and mitogen-activated protein (MAP) kinase cascade. This is Somatostatin receptor type 4 (Sstr4) from Rattus norvegicus (Rat).